A 517-amino-acid chain; its full sequence is MDFSSTIASQLNAGTILPEGIVIITLVGVLVGDLIFGRSSKSWLPYMAIIGLLASIVALYLAWDSPHPIGFLNSFNSDNLSIVFRAIIALSTAVTILMSIRYVEQTGTSLAEFIAIMLTATLGGMFLCGANELVMIFISLEMLSISSYLMTGYMKRDPRSNEAALKYLLIGASSSAIFLYGVSLLYGLSAGETALDAIATKIAAANGGESLGLAIALVFVIAGIAFKISAVPFHQWTPDVYEGSPTPVVAFLSVGSKAAGFALAIRLLVTAFASVGEEWHFVFTALAILSMVLGNVVALAQTSMKRMLAYSSIGQAGFVMIGLVAGTDAGYSSMVFYLLVYLFMNLGAFACIILFSLRTGTDKISEYAGLYQKDPLLTLALSICLLSLGGIPPLAGFFGKIYLFWAGWQAELYGLVILGLVTSVVSIYYYIRVVKMMVVKEPQEMSDAVKNYPQIRWNLPGMRPLQVGIVLTLIATSLAGILSNPLFTLANDSVTSTPILQSAIINTRISQVPTESK.

14 helical membrane-spanning segments follow: residues 16–36 (ILPE…DLIF), 43–63 (WLPY…YLAW), 80–100 (LSIV…LMSI), 110–130 (LAEF…LCGA), 133–153 (LVMI…MTGY), 168–188 (LLIG…LYGL), 211–231 (LGLA…ISAV), 245–265 (PTPV…ALAI), 279–299 (WHFV…VVAL), 307–327 (MLAY…VAGT), 335–355 (VFYL…IILF), 379–399 (LALS…GFFG), 401–421 (IYLF…LGLV), and 467–487 (VGIV…NPLF).

It belongs to the complex I subunit 2 family. In terms of assembly, NDH-1 can be composed of about 15 different subunits; different subcomplexes with different compositions have been identified which probably have different functions.

It localises to the cellular thylakoid membrane. The catalysed reaction is a plastoquinone + NADH + (n+1) H(+)(in) = a plastoquinol + NAD(+) + n H(+)(out). It catalyses the reaction a plastoquinone + NADPH + (n+1) H(+)(in) = a plastoquinol + NADP(+) + n H(+)(out). NDH-1 shuttles electrons from an unknown electron donor, via FMN and iron-sulfur (Fe-S) centers, to quinones in the respiratory and/or the photosynthetic chain. The immediate electron acceptor for the enzyme in this species is believed to be plastoquinone. Couples the redox reaction to proton translocation, and thus conserves the redox energy in a proton gradient. Cyanobacterial NDH-1 also plays a role in inorganic carbon-concentration. This Rippkaea orientalis (strain PCC 8801 / RF-1) (Cyanothece sp. (strain PCC 8801)) protein is NAD(P)H-quinone oxidoreductase subunit 2.